Consider the following 205-residue polypeptide: Holliday junction branch migration complex subunit RuvA (205 aa).

A domain I region spans residues 1 to 64 (MIGKLKGSIE…EDQLKLFGFV (64 aa)). Residues 65–143 (SALEREWFNL…AFAGDASASI (79 aa)) form a domain II region. Residues 144–153 (GLKQELGEGV) form a flexible linker region. The segment at 153–205 (VASAPVADAVSALTNLGYSRDQAANAVAAALKNGGEGGDSAKLIRLGLKELSR) is domain III.

This sequence belongs to the RuvA family. Homotetramer. Forms an RuvA(8)-RuvB(12)-Holliday junction (HJ) complex. HJ DNA is sandwiched between 2 RuvA tetramers; dsDNA enters through RuvA and exits via RuvB. An RuvB hexamer assembles on each DNA strand where it exits the tetramer. Each RuvB hexamer is contacted by two RuvA subunits (via domain III) on 2 adjacent RuvB subunits; this complex drives branch migration. In the full resolvosome a probable DNA-RuvA(4)-RuvB(12)-RuvC(2) complex forms which resolves the HJ.

The protein resides in the cytoplasm. Its function is as follows. The RuvA-RuvB-RuvC complex processes Holliday junction (HJ) DNA during genetic recombination and DNA repair, while the RuvA-RuvB complex plays an important role in the rescue of blocked DNA replication forks via replication fork reversal (RFR). RuvA specifically binds to HJ cruciform DNA, conferring on it an open structure. The RuvB hexamer acts as an ATP-dependent pump, pulling dsDNA into and through the RuvAB complex. HJ branch migration allows RuvC to scan DNA until it finds its consensus sequence, where it cleaves and resolves the cruciform DNA. This chain is Holliday junction branch migration complex subunit RuvA, found in Agrobacterium fabrum (strain C58 / ATCC 33970) (Agrobacterium tumefaciens (strain C58)).